A 421-amino-acid chain; its full sequence is Lipid II:glycine glycyltransferase (421 aa).

This sequence belongs to the FemABX family. In terms of assembly, monomer.

It localises to the cytoplasm. It catalyses the reaction beta-D-GlcNAc-(1-&gt;4)-Mur2Ac(oyl-L-Ala-D-isoglutaminyl-L-Lys-D-Ala-D-Ala)-di-trans,octa-cis-undecaprenyl diphosphate + glycyl-tRNA(Gly) = beta-D-GlcNAc-(1-&gt;4)-Mur2Ac(oyl-L-Ala-D-isoglutaminyl-L-Lys-(N(6)-Gly)-D-Ala-D-Ala)-di-trans,octa-cis-undecaprenyl diphosphate + tRNA(Gly) + H(+). In terms of biological role, catalyzes the incorporation of the first glycine of the pentaglycine interpeptide bridge, which is characteristic of the S.aureus peptidoglycan. This glycine is added to the epsilon-amino group of the L-lysine of the membrane-bound lipid II intermediate (GlcNAc-(beta-1,4)-N-acetylmuramic acid(-L-Ala-D-iGln-L-Lys-D-Ala-D-Ala)-pyrophosphoryl-undecaprenol), using glycyl-tRNA(Gly) as donor, in a ribosome-independent mechanism. This chain is Lipid II:glycine glycyltransferase (femX), found in Staphylococcus aureus (strain MSSA476).